Reading from the N-terminus, the 279-residue chain is Bifunctional protein FolD (279 aa).

NADP(+) contacts are provided by residues 166–168 (GRS) and serine 191.

Belongs to the tetrahydrofolate dehydrogenase/cyclohydrolase family. As to quaternary structure, homodimer.

The catalysed reaction is (6R)-5,10-methylene-5,6,7,8-tetrahydrofolate + NADP(+) = (6R)-5,10-methenyltetrahydrofolate + NADPH. It catalyses the reaction (6R)-5,10-methenyltetrahydrofolate + H2O = (6R)-10-formyltetrahydrofolate + H(+). It participates in one-carbon metabolism; tetrahydrofolate interconversion. Its function is as follows. Catalyzes the oxidation of 5,10-methylenetetrahydrofolate to 5,10-methenyltetrahydrofolate and then the hydrolysis of 5,10-methenyltetrahydrofolate to 10-formyltetrahydrofolate. This is Bifunctional protein FolD from Shouchella clausii (strain KSM-K16) (Alkalihalobacillus clausii).